A 374-amino-acid polypeptide reads, in one-letter code: 5-pentadecatrienyl resorcinol O-methyltransferase (374 aa).

The S-adenosyl-L-methionine site is built by Asp239, Asp261, Met262, and Lys275. His279 acts as the Proton acceptor in catalysis.

It belongs to the class I-like SAM-binding methyltransferase superfamily. Cation-independent O-methyltransferase family. COMT subfamily. As to quaternary structure, homodimer. Expressed predominantly in root hairs.

The catalysed reaction is (8Z,11Z)-5-(pentadeca-8,11,14-trien-1-yl)resorcinol + S-adenosyl-L-methionine = (8Z,11Z)-5-(pentadeca- 8,11,14-trien-1-yl)resorcinol-3-methyl ether + S-adenosyl-L-homocysteine + H(+). In terms of biological role, O-methyltransferase involved in the biosynthetic pathway of the phytotoxin sorgoleone, a potent broad-spectrum inhibitor active against many agronomically important monocot and dicot weed species. Substrate specificity for alkylresorcinols. Strong preference for a five carbons alkyl side chain. The chain is 5-pentadecatrienyl resorcinol O-methyltransferase (OMT3) from Sorghum bicolor (Sorghum).